Here is a 339-residue protein sequence, read N- to C-terminus: Foldase protein PrsA (339 aa).

The N-terminal stretch at M1–G26 is a signal peptide. Residue C27 is the site of N-palmitoyl cysteine attachment. A lipid anchor (S-diacylglycerol cysteine) is attached at C27. One can recognise a PpiC domain in the interval K197–D287.

The protein belongs to the PrsA family.

The protein resides in the cell membrane. It catalyses the reaction [protein]-peptidylproline (omega=180) = [protein]-peptidylproline (omega=0). Its function is as follows. Plays a major role in protein secretion by helping the post-translocational extracellular folding of several secreted proteins. In Clostridium tetani (strain Massachusetts / E88), this protein is Foldase protein PrsA.